The primary structure comprises 403 residues: Queuine tRNA-ribosyltransferase catalytic subunit 1 (403 aa).

At Ala2 the chain carries N-acetylalanine. Asp105 (proton acceptor) is an active-site residue. 105–109 serves as a coordination point for queuine; the sequence is DSGGF. Residue Ser139 is modified to Phosphoserine. Queuine-binding residues include Asp159, Gln202, and Gly229. The interval 260–266 is RNA binding; it reads GVGYATD. The Nucleophile role is filled by Asp279. The interval 284–288 is RNA binding; important for wobble base 34 recognition; that stretch reads TRTAR. Cys317, Cys319, Cys322, and His348 together coordinate Zn(2+).

It belongs to the queuine tRNA-ribosyltransferase family. As to quaternary structure, heterodimer of a catalytic subunit QTRT1 and an accessory subunit QTRT2. Zn(2+) is required as a cofactor.

The protein resides in the cytoplasm. It is found in the mitochondrion outer membrane. The enzyme catalyses guanosine(34) in tRNA + queuine = queuosine(34) in tRNA + guanine. Catalytic subunit of the queuine tRNA-ribosyltransferase (TGT) that catalyzes the base-exchange of a guanine (G) residue with queuine (Q) at position 34 (anticodon wobble position) in tRNAs with GU(N) anticodons (tRNA-Asp, -Asn, -His and -Tyr), resulting in the hypermodified nucleoside queuosine (7-(((4,5-cis-dihydroxy-2-cyclopenten-1-yl)amino)methyl)-7-deazaguanosine). Catalysis occurs through a double-displacement mechanism. The nucleophile active site attacks the C1' of nucleotide 34 to detach the guanine base from the RNA, forming a covalent enzyme-RNA intermediate. The proton acceptor active site deprotonates the incoming queuine, allowing a nucleophilic attack on the C1' of the ribose to form the product. In Rattus norvegicus (Rat), this protein is Queuine tRNA-ribosyltransferase catalytic subunit 1.